Here is a 418-residue protein sequence, read N- to C-terminus: tRNA wybutosine-synthesizing protein 2 (418 aa).

Residues S228, K235, 275 to 276 (EI), and 302 to 303 (EN) contribute to the S-adenosyl-L-methionine site.

The protein belongs to the class I-like SAM-binding methyltransferase superfamily. TRM5/TYW2 family.

It is found in the cytoplasm. The protein resides in the nucleus. The enzyme catalyses 4-demethylwyosine(37) in tRNA(Phe) + S-adenosyl-L-methionine = 4-demethyl-7-[(3S)-3-amino-3-carboxypropyl]wyosine(37) in tRNA(Phe) + S-methyl-5'-thioadenosine + H(+). Its pathway is tRNA modification; wybutosine-tRNA(Phe) biosynthesis. Functionally, S-adenosyl-L-methionine-dependent transferase that acts as a component of the wybutosine biosynthesis pathway. Wybutosine is a hyper modified guanosine with a tricyclic base found at the 3'-position adjacent to the anticodon of eukaryotic phenylalanine tRNA. Catalyzes the transfer of the alpha-amino-alpha-carboxypropyl (acp) group from S-adenosyl-L-methionine to the C-7 position of 4-demethylwyosine (imG-14) to produce wybutosine-86. The chain is tRNA wybutosine-synthesizing protein 2 (trm12) from Schizosaccharomyces pombe (strain 972 / ATCC 24843) (Fission yeast).